Consider the following 1148-residue polypeptide: Zinc finger CCCH domain-containing protein 18 (1148 aa).

The span at 1–13 (MDTPESPTQSPQS) shows a compositional bias: low complexity. Disordered stretches follow at residues 1–315 (MDTP…PMDR), 380–417 (DPFS…LPPP), and 521–1127 (YTET…REEL). Basic and acidic residues-rich tracts occupy residues 53–73 (VPEH…AGRE) and 82–96 (EDYK…DIHQ). Acidic residues-rich tracts occupy residues 144–156 (ERGD…EEDE) and 167–176 (ELEEEEDEEE). The segment covering 190–202 (DLKDESSVSRDLD) has biased composition (basic and acidic residues). 2 stretches are compositionally biased toward acidic residues: residues 203–214 (EHELDYDEEVPE) and 233–245 (EDGE…DEEE). Residues 261–289 (DNRDTPLRKSEDSREGGRRDSFRDKKKEE) are compositionally biased toward basic and acidic residues. The span at 290–306 (DDGEIDEGEIDDDDLEE) shows a compositional bias: acidic residues. A compositionally biased stretch (gly residues) spans 388–397 (PPGGAAGGGP). The segment covering 530-615 (PDRERERDPR…EKKDEKEKTL (86 aa)) has biased composition (basic and acidic residues). Residues 543–584 (RERERERERDHRERERRQREREREREREREKDSRRRKDEWDR) are a coiled coil. The segment covering 622 to 631 (NMPPRGPMEP) has biased composition (pro residues). Residues 632–646 (PTKKDMLSVTKRPDE) show a composition bias toward basic and acidic residues. S666 carries the phosphoserine modification. The segment covering 677 to 740 (SGSSVSLSNS…SRSGSFSSSP (64 aa)) has biased composition (low complexity). Pro residues-rich tracts occupy residues 783–800 (KVMP…PPKP) and 807–817 (PPNPRPPGRPP). Positions 818 to 833 (GPREPREPPNMREGRK) are enriched in basic and acidic residues. Low complexity-rich tracts occupy residues 847–875 (VSGS…ASRS), 882–903 (SLSV…SVRS), and 914–925 (ASPVSSASSRSP). Composition is skewed to basic and acidic residues over residues 933–964 (DRGP…KRVD) and 1012–1029 (QTDR…KERP). S1056 carries the post-translational modification Phosphoserine. 2 stretches are compositionally biased toward low complexity: residues 1083–1098 (PAKS…SAAK) and 1107–1119 (GSAS…KPSS). A coiled-coil region spans residues 1118 to 1146 (SSTLSRREELLKQLKAVEDAIARKRAKIP).

Its subcellular location is the nucleus. This chain is Zinc finger CCCH domain-containing protein 18 (zc3h18), found in Danio rerio (Zebrafish).